Consider the following 466-residue polypeptide: Glutamate decarboxylase alpha (466 aa).

Positions 62 and 83 each coordinate substrate. Pyridoxal 5'-phosphate contacts are provided by residues serine 126 to serine 127, threonine 212, and histidine 275. Position 276 is an N6-(pyridoxal phosphate)lysine (lysine 276).

This sequence belongs to the group II decarboxylase family. In terms of assembly, homohexamer. Pyridoxal 5'-phosphate is required as a cofactor.

The enzyme catalyses L-glutamate + H(+) = 4-aminobutanoate + CO2. Its function is as follows. Converts glutamate to gamma-aminobutyrate (GABA), consuming one intracellular proton in the reaction. The gad system helps to maintain a near-neutral intracellular pH when cells are exposed to extremely acidic conditions. The ability to survive transit through the acidic conditions of the stomach is essential for successful colonization of the mammalian host by commensal and pathogenic bacteria. This Escherichia coli O6:H1 (strain CFT073 / ATCC 700928 / UPEC) protein is Glutamate decarboxylase alpha (gadA).